Here is a 243-residue protein sequence, read N- to C-terminus: Aquaporin SIP1-2 (243 aa).

The next 2 membrane-spanning stretches (helical) occupy residues 9–29 and 45–65; these read AAAADAVVTFLWVLCVSTLGA and FALLVTVSLLSVLLFVFNILC. Residues 74–76 carry the NPA 1 motif; the sequence is NPT. Helical transmembrane passes span 98 to 118, 136 to 156, and 163 to 183; these read LPAQAAGAVGGALAISELMPA, GAGAELVLTFVITLAVLLIIV, and IIKTWMISICTLCLVLSGAAY. Residues 189–191 carry the NPA 2 motif; it reads NPA. A helical transmembrane segment spans residues 211-231; sequence VYWICPFIGAILAAWIFRAMF.

It belongs to the MIP/aquaporin (TC 1.A.8) family. SIP (TC 1.A.8.10) subfamily.

It is found in the membrane. In terms of biological role, aquaporins facilitate the transport of water and small neutral solutes across cell membranes. This Zea mays (Maize) protein is Aquaporin SIP1-2 (SIP1-2).